The primary structure comprises 459 residues: Probable ECA polymerase (459 aa).

11 consecutive transmembrane segments (helical) span residues Leu-3–Leu-23, Ile-37–Leu-57, Val-65–Tyr-85, Leu-119–Phe-139, Gly-154–Leu-174, Trp-181–Gly-201, Ile-206–Trp-226, Met-227–Tyr-247, Leu-340–Ile-360, Tyr-377–Ala-397, and Val-409–Phe-429.

This sequence belongs to the WzyE family. As to quaternary structure, probably part of a complex composed of WzxE, WzyE and WzzE.

The protein localises to the cell inner membrane. It functions in the pathway bacterial outer membrane biogenesis; enterobacterial common antigen biosynthesis. Functionally, probably involved in the polymerization of enterobacterial common antigen (ECA) trisaccharide repeat units. In Photorhabdus laumondii subsp. laumondii (strain DSM 15139 / CIP 105565 / TT01) (Photorhabdus luminescens subsp. laumondii), this protein is Probable ECA polymerase.